The primary structure comprises 90 residues: Small ribosomal subunit protein bS16 (90 aa).

Belongs to the bacterial ribosomal protein bS16 family.

The protein is Small ribosomal subunit protein bS16 of Geobacillus kaustophilus (strain HTA426).